A 147-amino-acid polypeptide reads, in one-letter code: Virion protein 4 (147 aa).

It is found in the virion. In Enterococcus faecalis (Streptococcus faecalis), this protein is Virion protein 4.